The following is a 356-amino-acid chain: Carminomycin 4-O-methyltransferase DnrK (356 aa).

R153 contacts S-adenosyl-L-methionine. D163 provides a ligand contact to substrate. Residues G187, E210, 237 to 238 (DF), and S252 contribute to the S-adenosyl-L-methionine site. N257 and R303 together coordinate substrate.

The protein belongs to the class I-like SAM-binding methyltransferase superfamily. Cation-independent O-methyltransferase family. In terms of assembly, homodimer and homotetramer in equilibrium.

It catalyses the reaction carminomycin + S-adenosyl-L-methionine = daunorubicin + S-adenosyl-L-homocysteine + H(+). Its pathway is antibiotic biosynthesis; daunorubicin biosynthesis. The protein operates within antibiotic biosynthesis; carminomycin biosynthesis. Its function is as follows. Involved in the biosynthesis of the anthracyclines carminomycin and daunorubicin (daunomycin) which are aromatic polyketide antibiotics that exhibit high cytotoxicity and are widely applied in the chemotherapy of a variety of cancers. In vivo, catalyzes the transfer of a methyl group from S-adenosyl-L-methionine to the 4-O-position of carminomycin to form daunorubicin. In vitro, it also methylates the anthracyclines rhodomycin D (10-carbomethoxy-13-deoxycarminomycin) and 13-deoxy-carminomycin at the 4-hydroxyl position. It is quite specific with respect to the length of the carbohydrate chain at the C7 position, but it can accept substrates with bulky substituent at C10 position. In Streptomyces peucetius, this protein is Carminomycin 4-O-methyltransferase DnrK (dnrK).